The following is a 1471-amino-acid chain: ABC multidrug transporter F (1471 aa).

Polar residues predominate over residues 1-19 (MALNSTDNRWSTGEDTPSE). Residues 1–40 (MALNSTDNRWSTGEDTPSEAQLPDGEERLDAAPDEKVTAE) form a disordered region. N-linked (GlcNAc...) asparagine glycosylation is present at asparagine 4. The span at 25-40 (GEERLDAAPDEKVTAE) shows a compositional bias: basic and acidic residues. N-linked (GlcNAc...) asparagine glycans are attached at residues asparagine 71 and asparagine 311. The ABC transporter 1 domain occupies 133–387 (LKVPTMVRQA…FEQLGFQCPE (255 aa)). The chain crosses the membrane as a helical span at residues 498–518 (VTLAMLIGNFFEALIIASIFY). Asparagine 519 carries an N-linked (GlcNAc...) asparagine glycan. The next 5 membrane-spanning stretches (helical) occupy residues 532 to 552 (ALLF…ILTL), 578 to 598 (FIMS…TLYF), 607 to 627 (GPFF…SMFF), 641 to 661 (LAPS…TIPV), and 751 to 771 (IIIA…ELVA). Residues 791–819 (RAKQGQRDEEQPSASAVPSEKYSEAPTPV) are disordered. An ABC transporter 2 domain is found at 829–1071 (FHWEDVCYDV…TLMDYFVRNG (243 aa)). Asparagine 842 is a glycosylation site (N-linked (GlcNAc...) asparagine). 865–872 (GVSGAGKT) contributes to the ATP binding site. Helical transmembrane passes span 1167–1187 (YLYS…FSFF), 1201–1221 (FGVF…IPTF), 1252–1272 (FAWN…PVGL), 1288–1308 (LVFL…HLLI), and 1326–1346 (IMMY…GFWI). N-linked (GlcNAc...) asparagine glycosylation is found at asparagine 1386, asparagine 1422, and asparagine 1429. A helical transmembrane segment spans residues 1441-1461 (FGLLWVYVAVNTFGAVFLYWL).

It belongs to the ABC transporter superfamily. ABCG family. PDR (TC 3.A.1.205) subfamily.

The protein localises to the cell membrane. It catalyses the reaction fluconazole(in) + ATP + H2O = fluconazole(out) + ADP + phosphate + H(+). The enzyme catalyses itraconazole(in) + ATP + H2O = itraconazole(out) + ADP + phosphate + H(+). With respect to regulation, the efflux inhibitor FK506 impairs the transport activity. Pleiotropic ABC efflux transporter that shows a strong substrate specificity for the azole class of drugs such as lotrimazole (CLT), fluconazole (FLC), itraconazole (ITC), ketoconazole (KTC), posaconazole (POS), econazole (ECON), metconazole (MET), miconazole (MCZ), prochloraz (PCLZ), and tebuconazole (TEBZ). The chain is ABC multidrug transporter F from Aspergillus fumigatus (strain ATCC MYA-4609 / CBS 101355 / FGSC A1100 / Af293) (Neosartorya fumigata).